We begin with the raw amino-acid sequence, 545 residues long: CTP synthase (545 aa).

The segment at 1 to 266 is amidoligase domain; it reads MKTNYIFVTG…DDYICKRFSL (266 aa). Residue S14 participates in CTP binding. Position 14 (S14) interacts with UTP. Residues 15–20 and D72 contribute to the ATP site; that span reads SLGKGI. Mg(2+)-binding residues include D72 and E140. CTP contacts are provided by residues 147-149, 187-192, and K223; these read DIE and KTKPTQ. Residues 187-192 and K223 each bind UTP; that span reads KTKPTQ. 239–241 contributes to the ATP binding site; sequence KDV. Positions 291-542 constitute a Glutamine amidotransferase type-1 domain; sequence TIGMVGKYVE…VKAAGKYQKG (252 aa). An L-glutamine-binding site is contributed by G352. The Nucleophile; for glutamine hydrolysis role is filled by C379. L-glutamine is bound by residues 380–383, E403, and R470; that span reads LGMQ. Residues H515 and E517 contribute to the active site.

The protein belongs to the CTP synthase family. As to quaternary structure, homotetramer.

The catalysed reaction is UTP + L-glutamine + ATP + H2O = CTP + L-glutamate + ADP + phosphate + 2 H(+). It carries out the reaction L-glutamine + H2O = L-glutamate + NH4(+). The enzyme catalyses UTP + NH4(+) + ATP = CTP + ADP + phosphate + 2 H(+). Its pathway is pyrimidine metabolism; CTP biosynthesis via de novo pathway; CTP from UDP: step 2/2. Allosterically activated by GTP, when glutamine is the substrate; GTP has no effect on the reaction when ammonia is the substrate. The allosteric effector GTP functions by stabilizing the protein conformation that binds the tetrahedral intermediate(s) formed during glutamine hydrolysis. Inhibited by the product CTP, via allosteric rather than competitive inhibition. Its function is as follows. Catalyzes the ATP-dependent amination of UTP to CTP with either L-glutamine or ammonia as the source of nitrogen. Regulates intracellular CTP levels through interactions with the four ribonucleotide triphosphates. This chain is CTP synthase, found in Photorhabdus laumondii subsp. laumondii (strain DSM 15139 / CIP 105565 / TT01) (Photorhabdus luminescens subsp. laumondii).